The primary structure comprises 645 residues: Translation factor GUF1 homolog, mitochondrial (645 aa).

The 176-residue stretch at 40–215 (EKIRNFGIVA…AIVERVPAPT (176 aa)) folds into the tr-type G domain. GTP-binding positions include 49 to 56 (AHVDHGKS), 108 to 112 (DTPGH), and 162 to 165 (NKID).

This sequence belongs to the TRAFAC class translation factor GTPase superfamily. Classic translation factor GTPase family. LepA subfamily.

The protein localises to the mitochondrion inner membrane. It catalyses the reaction GTP + H2O = GDP + phosphate + H(+). Its function is as follows. Promotes mitochondrial protein synthesis. May act as a fidelity factor of the translation reaction, by catalyzing a one-codon backward translocation of tRNAs on improperly translocated ribosomes. Binds to mitochondrial ribosomes in a GTP-dependent manner. This chain is Translation factor GUF1 homolog, mitochondrial, found in Caenorhabditis briggsae.